A 117-amino-acid polypeptide reads, in one-letter code: Appetite-regulating hormone (117 aa).

The N-terminal stretch at M1–A23 is a signal peptide. S26 is lipidated: O-decanoyl serine; alternate. S26 carries O-hexanoyl serine; alternate lipidation. Residue S26 is the site of O-octanoyl serine; alternate attachment. Positions S29–P50 are disordered. The segment covering E31–K43 has biased composition (basic and acidic residues). The propeptide at A52–R75 is removed in mature form. Leucine amide is present on L98. The propeptide at G99 to K117 is removed in mature form.

Belongs to the motilin family. O-octanoylated by GOAT/MBOAT4. O-octanoylation or O-decanoylation is essential for ghrelin activity. The O-decanoylated forms Ghrelin-27-C10 and Ghrelin-28-C10 differ in the length of the carbon backbone of the carboxylic acid bound to Ser-26. A small fraction of ghrelin, ghrelin-28-C10:1, may be modified with a singly unsaturated carboxylic acid. Also O-acetylated and O-butyrylated on Ser-26 to minor levels. In terms of processing, amidation of Leu-98 is essential for obestatin activity. Highest level in stomach. All forms are found in serum as well. Other tissues compensate for the loss of ghrelin synthesis in the stomach following gastrectomy.

It localises to the secreted. Its function is as follows. Ghrelin is the ligand for growth hormone secretagogue receptor type 1 (GHSR). Induces the release of growth hormone from the pituitary. Has an appetite-stimulating effect, induces adiposity and stimulates gastric acid secretion. Involved in growth regulation. May be the ligand for GPR39. May have an appetite-reducing effect resulting in decreased food intake. May reduce gastric emptying activity and jejunal motility. This is Appetite-regulating hormone (GHRL) from Homo sapiens (Human).